The following is a 188-amino-acid chain: Elongation factor P (188 aa).

Belongs to the elongation factor P family.

Its subcellular location is the cytoplasm. The protein operates within protein biosynthesis; polypeptide chain elongation. Involved in peptide bond synthesis. Stimulates efficient translation and peptide-bond synthesis on native or reconstituted 70S ribosomes in vitro. Probably functions indirectly by altering the affinity of the ribosome for aminoacyl-tRNA, thus increasing their reactivity as acceptors for peptidyl transferase. The chain is Elongation factor P from Rickettsia africae (strain ESF-5).